We begin with the raw amino-acid sequence, 220 residues long: Glutamine amidotransferase-like class 1 domain-containing protein 1 (220 aa).

A signal peptide spans methionine 1–alanine 38. The N-linked (GlcNAc...) asparagine glycan is linked to asparagine 201.

It belongs to the peptidase C56 family. In terms of assembly, homotetramer. Component of the FERRY complex composed of five subunits, TBCK, PPP1R21, FERRY3, CRYZL1 and GATD1 with a ratio of 1:2:1:2:4, respectively.

The protein resides in the secreted. Its subcellular location is the early endosome. Functionally, component of the FERRY complex (Five-subunit Endosomal Rab5 and RNA/ribosome intermediary). The FERRY complex directly interacts with mRNAs and RAB5A, and functions as a RAB5A effector involved in the localization and the distribution of specific mRNAs most likely by mediating their endosomal transport. The complex recruits mRNAs and ribosomes to early endosomes through direct mRNA-interaction. The polypeptide is Glutamine amidotransferase-like class 1 domain-containing protein 1 (Homo sapiens (Human)).